Consider the following 506-residue polypeptide: ATP synthase subunit alpha (506 aa).

Residue Gly170–Thr177 participates in ATP binding.

Belongs to the ATPase alpha/beta chains family. As to quaternary structure, F-type ATPases have 2 components, CF(1) - the catalytic core - and CF(0) - the membrane proton channel. CF(1) has five subunits: alpha(3), beta(3), gamma(1), delta(1), epsilon(1). CF(0) has four main subunits: a(1), b(1), b'(1) and c(9-12).

It is found in the cellular thylakoid membrane. It catalyses the reaction ATP + H2O + 4 H(+)(in) = ADP + phosphate + 5 H(+)(out). Its function is as follows. Produces ATP from ADP in the presence of a proton gradient across the membrane. The alpha chain is a regulatory subunit. The sequence is that of ATP synthase subunit alpha from Synechococcus sp. (strain CC9605).